The following is a 506-amino-acid chain: UBX domain-containing protein 4 (506 aa).

An interaction with UBQLN1 region spans residues M1–E199. Residues M1–T411 are Cytoplasmic-facing. The interval Q110–L194 is disordered. 2 stretches are compositionally biased toward polar residues: residues S120–A136 and L153–A167. The region spanning D313–L391 is the UBX domain. Residues L412 to F432 lie within the membrane without spanning it. At S433–M506 the chain is on the cytoplasmic side. Residues P437–M506 form a disordered region. The span at A444 to S456 shows a compositional bias: low complexity. Basic and acidic residues predominate over residues K457–D489. At T487 the chain carries Phosphothreonine. Positions N496–M506 are enriched in polar residues.

As to quaternary structure, directly interacts with VCP. Interacts with UBQLN1. Forms a complex with VCP and UBQLN1. Expressed in many tissues, including brain, heart, kidney, liver, muscle and spleen (at protein level).

The protein resides in the endoplasmic reticulum membrane. The protein localises to the nucleus envelope. In terms of biological role, involved in endoplasmic reticulum-associated protein degradation (ERAD). Acts as a platform to recruit both UBQLN1 and VCP to the ER during ERAD. The polypeptide is UBX domain-containing protein 4 (Ubxn4) (Mus musculus (Mouse)).